Here is a 175-residue protein sequence, read N- to C-terminus: Adenine phosphoribosyltransferase (175 aa).

It belongs to the purine/pyrimidine phosphoribosyltransferase family. Homodimer.

It localises to the cytoplasm. The enzyme catalyses AMP + diphosphate = 5-phospho-alpha-D-ribose 1-diphosphate + adenine. It participates in purine metabolism; AMP biosynthesis via salvage pathway; AMP from adenine: step 1/1. Functionally, catalyzes a salvage reaction resulting in the formation of AMP, that is energically less costly than de novo synthesis. This chain is Adenine phosphoribosyltransferase, found in Parvibaculum lavamentivorans (strain DS-1 / DSM 13023 / NCIMB 13966).